A 362-amino-acid chain; its full sequence is Dual-specificity RNA methyltransferase RlmN (362 aa).

Glu-91 functions as the Proton acceptor in the catalytic mechanism. The Radical SAM core domain maps to Glu-97–Asp-333. Cys-104 and Cys-338 form a disulfide bridge. [4Fe-4S] cluster is bound by residues Cys-111, Cys-115, and Cys-118. Residues Gly-164–Glu-165, Ser-196, Ser-218–His-220, and Asn-295 contribute to the S-adenosyl-L-methionine site. Catalysis depends on Cys-338, which acts as the S-methylcysteine intermediate.

The protein belongs to the radical SAM superfamily. RlmN family. It depends on [4Fe-4S] cluster as a cofactor.

It is found in the cytoplasm. It catalyses the reaction adenosine(2503) in 23S rRNA + 2 reduced [2Fe-2S]-[ferredoxin] + 2 S-adenosyl-L-methionine = 2-methyladenosine(2503) in 23S rRNA + 5'-deoxyadenosine + L-methionine + 2 oxidized [2Fe-2S]-[ferredoxin] + S-adenosyl-L-homocysteine. It carries out the reaction adenosine(37) in tRNA + 2 reduced [2Fe-2S]-[ferredoxin] + 2 S-adenosyl-L-methionine = 2-methyladenosine(37) in tRNA + 5'-deoxyadenosine + L-methionine + 2 oxidized [2Fe-2S]-[ferredoxin] + S-adenosyl-L-homocysteine. Functionally, specifically methylates position 2 of adenine 2503 in 23S rRNA and position 2 of adenine 37 in tRNAs. m2A2503 modification seems to play a crucial role in the proofreading step occurring at the peptidyl transferase center and thus would serve to optimize ribosomal fidelity. The protein is Dual-specificity RNA methyltransferase RlmN of Methylobacillus flagellatus (strain ATCC 51484 / DSM 6875 / VKM B-1610 / KT).